Reading from the N-terminus, the 284-residue chain is Bifunctional protein FolD (284 aa).

Residues 165–167 (GAS), Ser-190, and Ile-231 each bind NADP(+).

The protein belongs to the tetrahydrofolate dehydrogenase/cyclohydrolase family. As to quaternary structure, homodimer.

It catalyses the reaction (6R)-5,10-methylene-5,6,7,8-tetrahydrofolate + NADP(+) = (6R)-5,10-methenyltetrahydrofolate + NADPH. The catalysed reaction is (6R)-5,10-methenyltetrahydrofolate + H2O = (6R)-10-formyltetrahydrofolate + H(+). The protein operates within one-carbon metabolism; tetrahydrofolate interconversion. Functionally, catalyzes the oxidation of 5,10-methylenetetrahydrofolate to 5,10-methenyltetrahydrofolate and then the hydrolysis of 5,10-methenyltetrahydrofolate to 10-formyltetrahydrofolate. This is Bifunctional protein FolD from Polynucleobacter necessarius subsp. necessarius (strain STIR1).